The sequence spans 181 residues: Large ribosomal subunit protein uL30 (181 aa).

The protein belongs to the universal ribosomal protein uL30 family. Part of the 50S ribosomal subunit.

The polypeptide is Large ribosomal subunit protein uL30 (Hyperthermus butylicus (strain DSM 5456 / JCM 9403 / PLM1-5)).